Reading from the N-terminus, the 157-residue chain is Regulator of Ty1 transposition protein 102 (157 aa).

A Phosphoserine modification is found at S77. The interval 95–157 (SLMTSHTKGD…TKESKDVKMN (63 aa)) is disordered. A compositionally biased stretch (polar residues) spans 96–116 (LMTSHTKGDTSKATGAPSANQ). Phosphoserine is present on S122. Basic and acidic residues predominate over residues 147–157 (NTKESKDVKMN).

In terms of assembly, interacts with STH1 and SWI3. Component of the two forms of the RSC complex composed of at least either RSC1 or RSC2, and ARP7, ARP9, LDB7, NPL6, RSC3, RSC30, RSC4, RSC58, RSC6, RSC8, RSC9, SFH1, STH1, HTL1 and probably RTT102. The complexes interact with histone and histone variant components of centromeric chromatin. Probable additional component of the SWI/SNF global transcription activator complex. The 1.14 MDa SWI/SNF complex is composed of 11 different subunits: one copy each of SWI1, SNF2/SWI2, SNF5, SNF12/SWP73, ARP7/SWP61, ARP9/SWP59; two copies each of SWI3, SNF6, SNF11, SWP82; and three copies of TAF14/SWP29.

The protein localises to the nucleus. Functionally, probable component of the chromatin structure-remodeling complex (RSC) which is involved in transcription regulation and nucleosome positioning. RSC is responsible for the transfer of a histone octamer from a nucleosome core particle to naked DNA. The reaction requires ATP and involves an activated RSC-nucleosome intermediate. Remodeling reaction also involves DNA translocation, DNA twist and conformational change. As a reconfigurer of centromeric and flanking nucleosomes, RSC complex is required both for proper kinetochore function in chromosome segregation and, via a PKC1-dependent signaling pathway, for organization of the cellular cytoskeleton. Probable component of the SWI/SNF complex, an ATP-dependent chromatin-remodeling complex, is required for the positive and negative regulation of gene expression of a large number of genes. It changes chromatin structure by altering DNA-histone contacts within a nucleosome, leading eventually to a change in nucleosome position, thus facilitating or repressing binding of gene-specific transcription factors. The chain is Regulator of Ty1 transposition protein 102 (RTT102) from Saccharomyces cerevisiae (strain ATCC 204508 / S288c) (Baker's yeast).